The following is a 188-amino-acid chain: Glutathione S-transferase 2 (188 aa).

One can recognise a GST N-terminal domain in the interval 2 to 79 (VHYKLMCFDV…FLARQYGYSG (78 aa)). Glutathione is bound by residues Lys-43, 49–51 (GQL), and 63–64 (QS). The region spanning 81–188 (TPTEEMQVDS…PHLNVFIRKL (108 aa)) is the GST C-terminal domain.

The protein belongs to the GST superfamily. Sigma family.

It carries out the reaction RX + glutathione = an S-substituted glutathione + a halide anion + H(+). Functionally, conjugation of reduced glutathione to a wide number of exogenous and endogenous hydrophobic electrophiles. The chain is Glutathione S-transferase 2 (gst-2) from Caenorhabditis elegans.